We begin with the raw amino-acid sequence, 141 residues long: Lysozyme P (141 aa).

The first 18 residues, 1 to 18 (MKAFLVICALTLTAVATQ), serve as a signal peptide directing secretion. The C-type lysozyme domain occupies 20–141 (RTMDRCSLAR…GSLPSINSCF (122 aa)). 4 cysteine pairs are disulfide-bonded: C25–C140, C46–C130, C81–C97, and C93–C111. Residues E51 and D69 contribute to the active site.

This sequence belongs to the glycosyl hydrolase 22 family. Salivary gland.

It carries out the reaction Hydrolysis of (1-&gt;4)-beta-linkages between N-acetylmuramic acid and N-acetyl-D-glucosamine residues in a peptidoglycan and between N-acetyl-D-glucosamine residues in chitodextrins.. In terms of biological role, unlikely to play an active role in the humoral immune defense. May have a function in the digestion of bacteria in the food. In Drosophila melanogaster (Fruit fly), this protein is Lysozyme P (LysP).